The following is a 682-amino-acid chain: Acetyl-coenzyme A synthetase 2-like, mitochondrial (682 aa).

A mitochondrion-targeting transit peptide spans 1–38 (MAARSLGSGVGRLLRGLQGRSGQSGWSLSVSRSTATRL). CoA-binding positions include 217 to 220 (RGGR) and Thr334. Lys389 carries the N6-acetyllysine modification. Residues 410–412 (GEP), 434–439 (DTWWQT), Asp526, and Arg541 contribute to the ATP site. Ser549 lines the CoA pocket. Arg552 is a binding site for ATP. The residue at position 635 (Lys635) is an N6-acetyllysine.

This sequence belongs to the ATP-dependent AMP-binding enzyme family. As to quaternary structure, interacts with SIRT3. Post-translationally, reversibly acetylated at Lys-635. The acetyl-CoA synthase activity is inhibited by acetylation and activated by deacetylation mediated by the deacetylase SIRT3. Highly expressed in heart, testis, kidney, skeletal muscle, lung and spleen. Detected at low levels in brain.

The protein resides in the mitochondrion matrix. The enzyme catalyses acetate + ATP + CoA = acetyl-CoA + AMP + diphosphate. The catalysed reaction is propanoate + ATP + CoA = propanoyl-CoA + AMP + diphosphate. Inhibited by acetylation at Lys-635 and activated by deacetylation mediated by the deacetylase SIRT3. Catalyzes the synthesis of acetyl-CoA from short-chain fatty acids. Acetate is the preferred substrate. Can also utilize propionate with a much lower affinity. Provides acetyl-CoA that is utilized mainly for oxidation under ketogenic conditions. Involved in thermogenesis under ketogenic conditions, using acetate as a vital fuel when carbohydrate availability is insufficient. The sequence is that of Acetyl-coenzyme A synthetase 2-like, mitochondrial (Acss1) from Mus musculus (Mouse).